A 135-amino-acid polypeptide reads, in one-letter code: Large ribosomal subunit protein bL21 (135 aa).

Over residues 109–128 (TLATAQSAPPSTSEATTDTT) the composition is skewed to polar residues. Residues 109 to 135 (TLATAQSAPPSTSEATTDTTGIPAAEE) are disordered.

This sequence belongs to the bacterial ribosomal protein bL21 family. Part of the 50S ribosomal subunit. Contacts protein L20.

Functionally, this protein binds to 23S rRNA in the presence of protein L20. In Synechococcus sp. (strain JA-3-3Ab) (Cyanobacteria bacterium Yellowstone A-Prime), this protein is Large ribosomal subunit protein bL21.